The primary structure comprises 121 residues: MNHAPHLYFAWQQLVEKSQLMLRLATEEQWDELIASEMAYVNAVQEIAHLTEEIDPSTTMQEQLRPMLRLILDNESKVKQLLQIRMDELAKLVGQSSVQKSVLSAYGDQGGFVLAPQDNFS.

The segment at 1–50 (MNHAPHLYFAWQQLVEKSQLMLRLATEEQWDELIASEMAYVNAVQEIAHL) is required for homodimerization. Positions 60–98 (MQEQLRPMLRLILDNESKVKQLLQIRMDELAKLVGQSSV) are fliD binding.

This sequence belongs to the FliT family. In terms of assembly, homodimer. Interacts with FliD and FlhC.

Its subcellular location is the cytoplasm. It localises to the cytosol. In terms of biological role, dual-function protein that regulates the transcription of class 2 flagellar operons and that also acts as an export chaperone for the filament-capping protein FliD. As a transcriptional regulator, acts as an anti-FlhDC factor; it directly binds FlhC, thus inhibiting the binding of the FlhC/FlhD complex to class 2 promoters, resulting in decreased expression of class 2 flagellar operons. As a chaperone, effects FliD transition to the membrane by preventing its premature polymerization, and by directing it to the export apparatus. This is Flagellar protein FliT from Escherichia coli (strain ATCC 8739 / DSM 1576 / NBRC 3972 / NCIMB 8545 / WDCM 00012 / Crooks).